We begin with the raw amino-acid sequence, 180 residues long: Peroxisome assembly protein 22 (180 aa).

Residues 15–32 (LGIVGTAIAVLVTSYYIY) traverse the membrane as a helical segment.

It belongs to the peroxin-22 family.

Its subcellular location is the peroxisome membrane. Its function is as follows. Involved in peroxisome biogenesis. This is Peroxisome assembly protein 22 (PEX22) from Saccharomyces cerevisiae (strain ATCC 204508 / S288c) (Baker's yeast).